The sequence spans 847 residues: Lethal(3)malignant brain tumor-like protein 1 (847 aa).

2 stretches are compositionally biased toward basic and acidic residues: residues 65-82 (FPRE…EKGV) and 144-155 (AVKEGHAKKDGD). Disordered regions lie at residues 65-87 (FPRE…SEPI), 142-163 (AEAV…PTSR), and 237-296 (VKKR…SEEK). MBT repeat units lie at residues 300–400 (WSWA…LQPP), 408–507 (FSWT…LTPP), and 516–611 (FIWE…LQPP). The interval 473–480 (FDNWDDTY) is interaction with monomethylated and dimethylated peptides. The CCHHC-type zinc-finger motif lies at 639 to 682 (SKYSFHHRKCPTPGCDGSGHVTGRFTAHYCLSGCPLAEKNQGKL). Residues cysteine 648, cysteine 653, histidine 666, and cysteine 672 each contribute to the Zn(2+) site. In terms of domain architecture, SAM spans 778–842 (WTIDEVFSFV…YNAILMFKNA (65 aa)).

As to quaternary structure, homodimer.

It is found in the nucleus. Polycomb group (PcG) protein that specifically recognizes and binds mono- and dimethyllysine residues on target proteins, thereby acting as a 'reader' of a network of post-translational modifications. PcG proteins maintain the transcriptionally repressive state of genes: acts as a chromatin compaction factor by recognizing and binding mono- and dimethylated histone H1b/H1-4 at 'Lys-26' (H1bK26me1 and H1bK26me2) and histone H4 at 'Lys-20' (H4K20me1 and H4K20me2), leading to condense chromatin and repress transcription. The polypeptide is Lethal(3)malignant brain tumor-like protein 1 (L3MBTL1) (Gallus gallus (Chicken)).